The primary structure comprises 250 residues: GTP cyclohydrolase 1 (250 aa).

Basic and acidic residues-rich tracts occupy residues 1–14 (MEKGPVRAPAEKPR) and 35–44 (PAEKPPRPEA). A disordered region spans residues 1 to 64 (MEKGPVRAPA…GERPRSEEDN (64 aa)). 2 positions are modified to phosphoserine: S60 and S81. Residues C141, H144, and C212 each coordinate Zn(2+).

It belongs to the GTP cyclohydrolase I family. Toroid-shaped homodecamer, composed of a dimer of pentamers. The inactive isoforms also form decamers and may possibly be incorporated into GCH1 heterodecamers, decreasing enzyme stability and activity. Interacts with AHSA1 and GCHFR/GFRP. In terms of processing, phosphorylated by casein kinase II at Ser-81 in HAECs during oscillatory shear stress; phosphorylation at Ser-81 results in increased enzyme activity. In epidermis, expressed predominantly in basal undifferentiated keratinocytes and in some but not all melanocytes (at protein level).

It localises to the cytoplasm. It is found in the nucleus. It catalyses the reaction GTP + H2O = 7,8-dihydroneopterin 3'-triphosphate + formate + H(+). Its pathway is cofactor biosynthesis; 7,8-dihydroneopterin triphosphate biosynthesis; 7,8-dihydroneopterin triphosphate from GTP: step 1/1. GTP shows a positive allosteric effect, and tetrahydrobiopterin inhibits the enzyme activity. Zinc is required for catalytic activity. Inhibited by Mg(2+). In terms of biological role, positively regulates nitric oxide synthesis in umbilical vein endothelial cells (HUVECs). May be involved in dopamine synthesis. May modify pain sensitivity and persistence. Isoform GCH-1 is the functional enzyme, the potential function of the enzymatically inactive isoforms remains unknown. The chain is GTP cyclohydrolase 1 (GCH1) from Homo sapiens (Human).